A 34-amino-acid chain; its full sequence is Delta-theraphotoxin-Hm1b (34 aa).

3 cysteine pairs are disulfide-bonded: C2–C16, C9–C21, and C15–C28. F34 carries the phenylalanine amide modification.

This sequence belongs to the neurotoxin 10 (Hwtx-1) family. 09 (HaTx) subfamily. Expressed by the venom gland.

It localises to the secreted. In terms of biological role, gating-modifier toxin that potently and selectively acts on Nav1.1/SCN1A and Nav1.3/SCN3A. It enhances hNav1.1/SCN1A currents and delays fast inactivation of the channel (EC(50)=11.6 nM), leading to a sustained current. Similar effects are observed at Nav1.3/SCN3A (EC(50)=11.8 nM), but with less sustained currents. When tested on Nav1.2/SCN2A, the native toxin decreases the peak current by 50% at saturating concentration, whereas the recombinant toxin only shows a weak decrease of peak current. The native toxin specifically activates the voltage-gated sodium channel Nav1.1/SCN1A in somatosensory neurons to elicit acute pain and mechanical allodynia. When tested on Nav1.1/SCN1A, the toxin induces a hyperpolarising shift of the voltage-dependence of steady-state activation, and induces a depolarizing shift in the voltage dependence of inactivation. In addition, it does not modify the recovery from fast inactivation in Nav1.1/SCN1A. The toxin hydrophobic face probably interacts with the domain IV voltage-sensor of Nav1.1/SCN1A and Nav1.3/SCN3A and may trap the voltage-sensing S4 helix in a partially activated state. In vivo, intracerebroventricular injection into mice elicits convulsions, spasms, tremors and rapid death. When injected into mouse hindpaw, the toxin elicits an immediate and robust response to pain. However, intraplantar injection of toxin does not cause neurogenic inflammation or alter sensitivity to heat, indicative of a modality-specific effect on mechanosensitive neurons. This is Delta-theraphotoxin-Hm1b from Heteroscodra maculata (Togo starburst tarantula).